A 258-amino-acid polypeptide reads, in one-letter code: Imidazole glycerol phosphate synthase subunit HisF (258 aa).

Catalysis depends on residues aspartate 11 and aspartate 130.

This sequence belongs to the HisA/HisF family. Heterodimer of HisH and HisF.

The protein localises to the cytoplasm. The enzyme catalyses 5-[(5-phospho-1-deoxy-D-ribulos-1-ylimino)methylamino]-1-(5-phospho-beta-D-ribosyl)imidazole-4-carboxamide + L-glutamine = D-erythro-1-(imidazol-4-yl)glycerol 3-phosphate + 5-amino-1-(5-phospho-beta-D-ribosyl)imidazole-4-carboxamide + L-glutamate + H(+). It participates in amino-acid biosynthesis; L-histidine biosynthesis; L-histidine from 5-phospho-alpha-D-ribose 1-diphosphate: step 5/9. IGPS catalyzes the conversion of PRFAR and glutamine to IGP, AICAR and glutamate. The HisF subunit catalyzes the cyclization activity that produces IGP and AICAR from PRFAR using the ammonia provided by the HisH subunit. This Rhodopseudomonas palustris (strain BisB18) protein is Imidazole glycerol phosphate synthase subunit HisF.